A 176-amino-acid polypeptide reads, in one-letter code: ATP synthase subunit b, chloroplastic (176 aa).

Residues 27 to 49 traverse the membrane as a helical segment; sequence ILNLAAVFALLAYVGTDFVSSLL.

Belongs to the ATPase B chain family. As to quaternary structure, F-type ATPases have 2 components, F(1) - the catalytic core - and F(0) - the membrane proton channel. F(1) has five subunits: alpha(3), beta(3), gamma(1), delta(1), epsilon(1). F(0) has four main subunits: a(1), b(1), b'(1) and c(10-14). The alpha and beta chains form an alternating ring which encloses part of the gamma chain. F(1) is attached to F(0) by a central stalk formed by the gamma and epsilon chains, while a peripheral stalk is formed by the delta, b and b' chains.

Its subcellular location is the plastid. The protein localises to the chloroplast thylakoid membrane. Its function is as follows. F(1)F(0) ATP synthase produces ATP from ADP in the presence of a proton or sodium gradient. F-type ATPases consist of two structural domains, F(1) containing the extramembraneous catalytic core and F(0) containing the membrane proton channel, linked together by a central stalk and a peripheral stalk. During catalysis, ATP synthesis in the catalytic domain of F(1) is coupled via a rotary mechanism of the central stalk subunits to proton translocation. In terms of biological role, component of the F(0) channel, it forms part of the peripheral stalk, linking F(1) to F(0). The polypeptide is ATP synthase subunit b, chloroplastic (Nephroselmis olivacea (Green alga)).